The chain runs to 157 residues: uncharacterized protein (157 aa).

This is an uncharacterized protein from Rickettsia prowazekii (strain Madrid E).